The following is a 500-amino-acid chain: Plexin domain-containing protein 1 (500 aa).

A signal peptide spans 1 to 18; that stretch reads MRGELWLLVLVLREAARA. Over 19-426 the chain is Extracellular; it reads LSPQPGAGHD…TKGTPVHLGT (408 aa). Disordered stretches follow at residues 20 to 39 and 46 to 78; these read SPQP…AAKG and RRAR…DTLP. An O-linked (Xyl...) (chondroitin sulfate) serine glycan is attached at serine 33. Over residues 47–60 the composition is skewed to basic and acidic residues; the sequence is RARESPGHVSEPDR. 2 N-linked (GlcNAc...) asparagine glycosylation sites follow: asparagine 80 and asparagine 197. The interval 359-379 is disordered; that stretch reads FQDEDHDSASPDTSFSPYDGD. The segment covering 368 to 379 has biased composition (polar residues); sequence SPDTSFSPYDGD. A helical membrane pass occupies residues 427 to 447; it reads IVGIVLAVLLVAAIILAGIYI. At 448–500 the chain is on the cytoplasmic side; the sequence is NGHPTSNAALFFIERRPHHWPAMKFRSHPDHSTYAEVEPSGHEKEGFMEAEQC. The span at 479-494 shows a compositional bias: basic and acidic residues; that stretch reads STYAEVEPSGHEKEGF. A disordered region spans residues 479–500; the sequence is STYAEVEPSGHEKEGFMEAEQC.

Belongs to the plexin family. Interacts with NID1. May interact with CTTN. Post-translationally, N-glycosylated. As to expression, detected in urine (at protein level). Detected in endothelial cells from colorectal cancer, and in endothelial cells from primary cancers of the lung, liver, pancreas, breast and brain. Not detectable in endothelial cells from normal tissue. Expressed in fibrovascular membrane with increased expression in individuals with proliferative diabetic retinopathy.

It is found in the secreted. The protein resides in the cell membrane. It localises to the cell junction. Its subcellular location is the tight junction. The protein localises to the cytoplasm. Functionally, plays a critical role in endothelial cell capillary morphogenesis. This chain is Plexin domain-containing protein 1 (PLXDC1), found in Homo sapiens (Human).